The following is a 724-amino-acid chain: Solute carrier organic anion transporter family member 4C1 (724 aa).

Residues 1–80 (MQGSKGVENP…PPGSQLSELE (80 aa)) are disordered. Topologically, residues 1 to 101 (MQGSKGVENP…QCLQRCNNPK (101 aa)) are cytoplasmic. Phosphoserine occurs at positions 15 and 16. A Phosphothreonine modification is found at T19. Phosphoserine is present on residues S24, S26, and S28. A compositionally biased stretch (polar residues) spans 25 to 46 (ASPSQVEVSAVASRNQNGGSQP). The helical transmembrane segment at 102–122 (GFLLHYCLLALTQGIVVNGLV) threads the bilayer. Over 123-141 (NISISTIEKRYEMKSSLTG) the chain is Extracellular. Residues 142 to 162 (LISSSYDISFCVLSLFVSFFG) traverse the membrane as a helical segment. The Cytoplasmic portion of the chain corresponds to 163–168 (ERGHKP). The chain crosses the membrane as a helical span at residues 169-193 (RWLAFASFMIGLGALVFSLPHFFSG). Topologically, residues 194–218 (RYELGTIFEDTCLTRNSTRCASSTS) are extracellular. A helical membrane pass occupies residues 219–249 (LLSNYFYVFVLGQLLLGTGGTPLYTLGTAFI). The Cytoplasmic portion of the chain corresponds to 250-269 (DDSVPTHKSSLYIGIGYSMS). Residues 270 to 290 (ILGPAIGYVLGGQLLTMYIDV) form a helical membrane-spanning segment. Topologically, residues 291–306 (AMGQSSDLTEDDPRWL) are extracellular. A helical transmembrane segment spans residues 307–331 (GAWWIGFLLAWLFAWSLIMPFSCFP). At 332-376 (KHLPGTAKIQAGKTSQTHQNNSTSFQHMDENFGKSIKDFPTAVKN) the chain is on the cytoplasmic side. The chain crosses the membrane as a helical span at residues 377–398 (LMRNTVFICLVLSTTSEALVTT). Residues 399–418 (GFATFLPKFIENQFGLTSSF) are Extracellular-facing. A helical transmembrane segment spans residues 419–442 (AATLGGAVLIPGAALGQILGGVLV). Over 443–446 (SKFK) the chain is Cytoplasmic. The helical transmembrane segment at 447 to 470 (MKCKNTMKFALCTSGVALMLSFVF) threads the bilayer. Over 471–580 (IYAKCENGPF…KTQCSNLPIF (110 aa)) the chain is Extracellular. Positions 494-549 (GNLTAPCNANCNCLRSYYYPLCGSDGVQYFSPCFAGCLNSVSNRKPKAYYNCSCIE) constitute a Kazal-like domain. Disulfide bonds link C500/C530, C506/C526, and C515/C547. Residues 581–603 (LGIFFITVIFTFMAGTPITVSIL) form a helical membrane-spanning segment. The Cytoplasmic segment spans residues 604 to 612 (RCVNHRQRS). A helical transmembrane segment spans residues 613-638 (LALGVQFMLLRLLGTIPGPIIFGVTI). Residues 639 to 672 (DSTCVLWDINECGTKGACWIYDNIRMAHMLVAIS) lie on the Extracellular side of the membrane. A helical transmembrane segment spans residues 673–690 (VTCKVITIFFNGLAIVLY). Over 691–724 (KPPPPGTEVSFQSQNVVVSTITVEEDLNKIENEG) the chain is Cytoplasmic.

The protein belongs to the organo anion transporter (TC 2.A.60) family. As to expression, predominantly expressed in kidney and lung but also weakly expressed in brain. Localizes primarily in the proximal straight tubules, the S3 fraction of the nephron.

Its subcellular location is the basolateral cell membrane. It localises to the apical cell membrane. It catalyses the reaction estrone 3-sulfate(out) = estrone 3-sulfate(in). It carries out the reaction L-thyroxine(out) = L-thyroxine(in). The enzyme catalyses 3,3',5-triiodo-L-thyronine(out) = 3,3',5-triiodo-L-thyronine(in). The catalysed reaction is chenodeoxycholate(out) = chenodeoxycholate(in). It catalyses the reaction glycocholate(out) = glycocholate(in). It carries out the reaction L-homoarginine(in) = L-homoarginine(out). The enzyme catalyses L-arginine(in) = L-arginine(out). The catalysed reaction is N(omega),N(omega)-dimethyl-L-arginine(out) = N(omega),N(omega)-dimethyl-L-arginine(in). Mediates the transport of organic anions such as steroids (estrone 3-sulfate, chenodeoxycholate, glycocholate) and thyroid hormones (3,3',5-triiodo-L-thyronine (T3), L-thyroxine (T4)), in the kidney. Capable of transporting cAMP and pharmacological substances such as digoxin, ouabain and methotrexate. Transport is independent of sodium, chloride ion, and ATP. Transport activity is stimulated by an acidic extracellular environment due to increased substrate affinity to the transporter. The driving force for this transport activity is currently not known. The role of hydrogencarbonate (HCO3(-), bicarbonate) as the probable counteranion that exchanges for organic anions is still not well defined. Functions as an uptake transporter at the apical membrane, suggesting a role in renal reabsorption. Involved in the renal secretion of the uremic toxin ADMA (N(omega),N(omega)-dimethyl-L-arginine or asymmetrical dimethylarginine), which is associated to cardiovascular events and mortality, and the structurally related amino acids L-arginine and L-homoarginine (a cardioprotective biomarker). Can act bidirectionally, suggesting a dual protective role of this transport protein; exporting L-homoarginine after being synthesized in proximal tubule cells, and mediating uptake of ADMA from the blood into proximal tubule cells where it is degraded by the enzyme dimethylarginine dimethylaminohydrolase 1 (DDAH1). May be involved in sperm maturation by enabling directed movement of organic anions and compounds within or between cells. This ion-transporting process is important to maintain the strict epididymal homeostasis necessary for sperm maturation. May have a role in secretory functions since seminal vesicle epithelial cells are assumed to secrete proteins involved in decapacitation by modifying surface proteins to facilitate the acquisition of the ability to fertilize the egg. This is Solute carrier organic anion transporter family member 4C1 from Rattus norvegicus (Rat).